A 227-amino-acid polypeptide reads, in one-letter code: Ribonuclease 3 (227 aa).

In terms of domain architecture, RNase III spans 3 to 130; the sequence is TNAISKIIKY…LIGAIYLDGG (128 aa). Glu-43 lines the Mg(2+) pocket. Asp-47 is an active-site residue. Mg(2+)-binding residues include Asn-116 and Glu-119. Glu-119 is a catalytic residue. The DRBM domain maps to 155–224; that stretch reads DAKTILQEWA…ASLMLAKINY (70 aa).

The protein belongs to the ribonuclease III family. Homodimer. Requires Mg(2+) as cofactor.

The protein localises to the cytoplasm. It carries out the reaction Endonucleolytic cleavage to 5'-phosphomonoester.. Digests double-stranded RNA. Involved in the processing of primary rRNA transcript to yield the immediate precursors to the large and small rRNAs (23S and 16S). Processes some mRNAs, and tRNAs when they are encoded in the rRNA operon. Processes pre-crRNA and tracrRNA of type II CRISPR loci if present in the organism. The sequence is that of Ribonuclease 3 from Ehrlichia ruminantium (strain Welgevonden).